The sequence spans 435 residues: MDIETDGRFGNKRVHHRLGPANGAASSSTSGKVCIHWRAGRCNRFPCPYLHSELPEATAKRPSQSGGGGNVWRNPHSGGGGGRGAGGAGGPNKWGRGPGGADGGPRHKVPDRPCRYFLAGDCSYGEKCRYPHSYSMSDSITMLTPLQGHEKVVTGIALPAGSDKLYSGSKDGTVRMWDCQTGQCAGVINMGREIGCMISEGPWLFVGIPDAVKVWNMQTQAEMNLTGPTGQVYALAVGNELLFAATQDGRILAWRFSAATNGFEPAASLVGHQLAVVSLVVGAMRLYSASMDKTIRVWDLATLQCIQTLSDHTGVVMSVLCWDQFLLSCSLDQTIKVWAATESGSLEVTYTHKEEHGALALSGMPDAQSKPVLLCSLNDNTVRLYDLPSFSDRGRIFSKQEIRAIQVGPSGLFFTGDGTGELKVWQWVIDGSQTK.

Disordered regions lie at residues 1 to 30 (MDIETDGRFGNKRVHHRLGPANGAASSSTS) and 58 to 107 (TAKR…GPRH). Residues 28 to 54 (STSGKVCIHWRAGRCNRFPCPYLHSEL) form a C3H1-type 1 zinc finger. A compositionally biased stretch (gly residues) spans 77–103 (SGGGGGRGAGGAGGPNKWGRGPGGADG). The C3H1-type 2 zinc finger occupies 108–135 (KVPDRPCRYFLAGDCSYGEKCRYPHSYS). 7 WD repeats span residues 148–189 (GHEK…GVIN), 191–225 (GREIGCMISEGPWLFVGIPDAVKVWNMQTQAEMNL), 227–264 (GPTGQVYALAVGNELLFAATQDGRILAWRFSAATNGFE), 271–308 (GHQLAVVSLVVGAMRLYSASMDKTIRVWDLATLQCIQT), 311–348 (DHTGVVMSVLCWDQFLLSCSLDQTIKVWAATESGSLEV), 355–395 (EHGA…DRGR), and 397–435 (FSKQEIRAIQVGPSGLFFTGDGTGELKVWQWVIDGSQTK).

The polypeptide is Zinc finger CCCH domain-containing protein 17 (Oryza sativa subsp. japonica (Rice)).